Reading from the N-terminus, the 121-residue chain is MIDLDTLKFDGNGLIGAIAQDNRTGEVLMFAFMNREALEKTIETGIAHYWSRSRQKLWKKGESSGHMQKVHELLIDCDMDAIILKISQEGGACHTGYRSCFYRNIEGDVVGEKVFDPADVY.

Asp76 is a Mg(2+) binding site. A Zn(2+)-binding site is contributed by Cys77. Mg(2+) contacts are provided by Asp78 and Asp80. Zn(2+) contacts are provided by Cys93 and Cys100.

This sequence belongs to the PRA-CH family. In terms of assembly, homodimer. Mg(2+) is required as a cofactor. It depends on Zn(2+) as a cofactor.

It is found in the cytoplasm. It carries out the reaction 1-(5-phospho-beta-D-ribosyl)-5'-AMP + H2O = 1-(5-phospho-beta-D-ribosyl)-5-[(5-phospho-beta-D-ribosylamino)methylideneamino]imidazole-4-carboxamide. It functions in the pathway amino-acid biosynthesis; L-histidine biosynthesis; L-histidine from 5-phospho-alpha-D-ribose 1-diphosphate: step 3/9. In terms of biological role, catalyzes the hydrolysis of the adenine ring of phosphoribosyl-AMP. The chain is Phosphoribosyl-AMP cyclohydrolase from Methanococcoides burtonii (strain DSM 6242 / NBRC 107633 / OCM 468 / ACE-M).